A 564-amino-acid chain; its full sequence is MNSHEILLILAFFALVLVPAPFLGRYCFKVMEGQRNLLSAPLAPLERVCYRLFGVDPASEQDWKTYTLALLAFNLAGLVLLFSILMLQGSLPLNPQHLPGLEWTLAFNTAVSFVTNTNWQAYSGEASLSYFSQMVGLTVQNFVSAAVGLCVLVALARGISRRSTRQLGNFWVDLTRGTLYVLLPLCLLLALLLVWQGVPQTFFDYVHATTLQGAEQTIPLGPAASQIAIKQLGTNGGGFFGVNSTHPFENPSAWSNLFEVASIILIPAALVFTFGHYVKDLRQSRAILGCMLLLFCLGLGLSLWAEYQPNPALAQLPIEQGAPMEGKESRFGTAASMLWAITTTAASNGSVNAMHDSLSPLGGMLPLLNMMLGEVIFGGVGAGLYGMLLFVLIAVFLAGLMVGRTPEYLGKKLEAKEVRLLVFTLLVMPVGVLVLGAIAASLPGPASAVTNPGPHGFSQLLYAYTSGSANNGSAFAGFGANTPFHNLMIGLAMLIGRFGYILPILAIAGSLAAKKASPVGPNSFPTHGPLFVSLLTVTILLVGGLTFLPTLALGPIAEQLSLGF.

Transmembrane regions (helical) follow at residues 4 to 24, 67 to 87, 135 to 155, 179 to 199, 258 to 278, 286 to 306, 376 to 396, 420 to 440, 487 to 507, and 528 to 548; these read HEIL…PFLG, TLAL…ILML, VGLT…LVAL, LYVL…QGVP, FEVA…GHYV, AILG…LWAE, IFGG…IAVF, LLVF…AIAA, LMIG…ILAI, and GPLF…LTFL.

This sequence belongs to the KdpA family. In terms of assembly, the system is composed of three essential subunits: KdpA, KdpB and KdpC.

The protein localises to the cell inner membrane. In terms of biological role, part of the high-affinity ATP-driven potassium transport (or Kdp) system, which catalyzes the hydrolysis of ATP coupled with the electrogenic transport of potassium into the cytoplasm. This subunit binds the periplasmic potassium ions and delivers the ions to the membrane domain of KdpB through an intramembrane tunnel. The protein is Potassium-transporting ATPase potassium-binding subunit of Pseudomonas aeruginosa (strain ATCC 15692 / DSM 22644 / CIP 104116 / JCM 14847 / LMG 12228 / 1C / PRS 101 / PAO1).